A 104-amino-acid polypeptide reads, in one-letter code: Phosphoribosyl-ATP pyrophosphatase (104 aa).

This sequence belongs to the PRA-PH family.

It localises to the cytoplasm. It carries out the reaction 1-(5-phospho-beta-D-ribosyl)-ATP + H2O = 1-(5-phospho-beta-D-ribosyl)-5'-AMP + diphosphate + H(+). The protein operates within amino-acid biosynthesis; L-histidine biosynthesis; L-histidine from 5-phospho-alpha-D-ribose 1-diphosphate: step 2/9. The protein is Phosphoribosyl-ATP pyrophosphatase of Methanosarcina barkeri (strain Fusaro / DSM 804).